The following is a 124-amino-acid chain: Small ribosomal subunit protein bS6 (124 aa).

Belongs to the bacterial ribosomal protein bS6 family.

Binds together with bS18 to 16S ribosomal RNA. This is Small ribosomal subunit protein bS6 from Actinobacillus pleuropneumoniae serotype 5b (strain L20).